The following is a 331-amino-acid chain: Major outer membrane protein P.IB (331 aa).

The first 19 residues, 1–19 (MKKSLIALTLAALPVAAMA), serve as a signal peptide directing secretion.

This sequence belongs to the Gram-negative porin family. In terms of assembly, homotrimer.

The protein localises to the cell outer membrane. Serves as a slightly cation selective porin. This chain is Major outer membrane protein P.IB (porB), found in Neisseria meningitidis serogroup B (strain ATCC BAA-335 / MC58).